A 256-amino-acid polypeptide reads, in one-letter code: Small ribosomal subunit protein eS1 (256 aa).

A2 carries the N-acetylalanine; partial modification.

Belongs to the eukaryotic ribosomal protein eS1 family. As to quaternary structure, component of the small ribosomal subunit. Mature ribosomes consist of a small (40S) and a large (60S) subunit. The 40S subunit contains about 33 different proteins and 1 molecule of RNA (18S). The 60S subunit contains about 49 different proteins and 3 molecules of RNA (25S, 5.8S and 5S).

The protein localises to the cytoplasm. This chain is Small ribosomal subunit protein eS1, found in Laccaria bicolor (strain S238N-H82 / ATCC MYA-4686) (Bicoloured deceiver).